Consider the following 149-residue polypeptide: Pleckstrin homology domain-containing family J member 1 (149 aa).

A PH domain is found at 15–108 (PAEMAAELGM…WMEALRRASY (94 aa)).

As to expression, expressed in testis and liver.

The sequence is that of Pleckstrin homology domain-containing family J member 1 (PLEKHJ1) from Homo sapiens (Human).